A 296-amino-acid polypeptide reads, in one-letter code: Ribosomal RNA small subunit methyltransferase A (296 aa).

Asn-32, Leu-34, Gly-59, Glu-80, Asp-105, and Asn-130 together coordinate S-adenosyl-L-methionine.

The protein belongs to the class I-like SAM-binding methyltransferase superfamily. rRNA adenine N(6)-methyltransferase family. RsmA subfamily.

Its subcellular location is the cytoplasm. The catalysed reaction is adenosine(1518)/adenosine(1519) in 16S rRNA + 4 S-adenosyl-L-methionine = N(6)-dimethyladenosine(1518)/N(6)-dimethyladenosine(1519) in 16S rRNA + 4 S-adenosyl-L-homocysteine + 4 H(+). In terms of biological role, specifically dimethylates two adjacent adenosines (A1518 and A1519) in the loop of a conserved hairpin near the 3'-end of 16S rRNA in the 30S particle. May play a critical role in biogenesis of 30S subunits. The chain is Ribosomal RNA small subunit methyltransferase A from Lactiplantibacillus plantarum (strain ATCC BAA-793 / NCIMB 8826 / WCFS1) (Lactobacillus plantarum).